Consider the following 307-residue polypeptide: Ribonuclease Z (307 aa).

Residues His61, His63, Asp65, His66, His138, Asp208, and His264 each coordinate Zn(2+). Asp65 acts as the Proton acceptor in catalysis.

It belongs to the RNase Z family. In terms of assembly, homodimer. Zn(2+) serves as cofactor.

It catalyses the reaction Endonucleolytic cleavage of RNA, removing extra 3' nucleotides from tRNA precursor, generating 3' termini of tRNAs. A 3'-hydroxy group is left at the tRNA terminus and a 5'-phosphoryl group is left at the trailer molecule.. In terms of biological role, zinc phosphodiesterase, which displays some tRNA 3'-processing endonuclease activity. Probably involved in tRNA maturation, by removing a 3'-trailer from precursor tRNA. Also shows activity toward a broad range of substrates, such as intron containing pre-tRNAs, 5' extended precursors and non-RNA substrates. The protein is Ribonuclease Z of Pyrococcus furiosus (strain ATCC 43587 / DSM 3638 / JCM 8422 / Vc1).